The sequence spans 253 residues: 5-oxoprolinase subunit A (253 aa).

This sequence belongs to the LamB/PxpA family. In terms of assembly, forms a complex composed of PxpA, PxpB and PxpC.

It catalyses the reaction 5-oxo-L-proline + ATP + 2 H2O = L-glutamate + ADP + phosphate + H(+). Catalyzes the cleavage of 5-oxoproline to form L-glutamate coupled to the hydrolysis of ATP to ADP and inorganic phosphate. The polypeptide is 5-oxoprolinase subunit A (Bacillus licheniformis (strain ATCC 14580 / DSM 13 / JCM 2505 / CCUG 7422 / NBRC 12200 / NCIMB 9375 / NCTC 10341 / NRRL NRS-1264 / Gibson 46)).